The following is a 468-amino-acid chain: PTS system mannitol-specific EIICB component (468 aa).

The Cytoplasmic segment spans residues 1-25 (MNNQPSFRARVQKFGSFLSGMIMPN). The PTS EIIC type-2 domain maps to 14-344 (FGSFLSGMIM…ILKTSKATAE (331 aa)). The helical transmembrane segment at 26–47 (IGAFIAWGLITALFIPTGWWPN) threads the bilayer. Residues 48–51 (EQLA) are Extracellular-facing. The chain crosses the membrane as a helical span at residues 52-72 (ELVGPMITYLLPLLIGYTGGK). Residues 73–135 (MIYDVRGGVV…SGFEMLVNNF (63 aa)) are Cytoplasmic-facing. Residues 136–157 (SAGILAAILAIVAFLGIGPVVV) form a helical membrane-spanning segment. The Extracellular portion of the chain corresponds to 158-166 (SFSNVLASG). A helical transmembrane segment spans residues 167 to 187 (VEVIIGAGLLPLASIFIEPAK). Over 188–274 (VLFLNNAINH…ILMKPTLILA (87 aa)) the chain is Cytoplasmic. A helical transmembrane segment spans residues 275-294 (VIAGGMSGVFTFVLFNAGLV). At 295-314 (AVPSPGSIFALLAMTPRGEY) the chain is on the extracellular side. A helical membrane pass occupies residues 315–336 (AGVLAGVIIATVVSFVIASIIL). Topologically, residues 337–468 (KTSKATAEDL…YDELVNRLKS (132 aa)) are cytoplasmic. One can recognise a PTS EIIB type-2 domain in the interval 380–468 (NKIIFACDAG…YDELVNRLKS (89 aa)). Cys386 acts as the Phosphocysteine intermediate; for EIIB activity in catalysis. Cys386 is modified (phosphocysteine; by EIIA).

In terms of assembly, homodimer.

The protein localises to the cell membrane. The catalysed reaction is D-mannitol(out) + N(pros)-phospho-L-histidyl-[protein] = D-mannitol 1-phosphate(in) + L-histidyl-[protein]. Functionally, the phosphoenolpyruvate-dependent sugar phosphotransferase system (sugar PTS), a major carbohydrate active transport system, catalyzes the phosphorylation of incoming sugar substrates concomitantly with their translocation across the cell membrane. The enzyme II CmtAB PTS system is involved in D-mannitol transport. This chain is PTS system mannitol-specific EIICB component (mtlA), found in Halalkalibacterium halodurans (strain ATCC BAA-125 / DSM 18197 / FERM 7344 / JCM 9153 / C-125) (Bacillus halodurans).